The following is a 290-amino-acid chain: Arylamine N-acetyltransferase 1 (290 aa).

The residue at position 1 (Met1) is an N-acetylmethionine. Cys68 serves as the catalytic Acyl-thioester intermediate. Thr103 and Gly104 together coordinate CoA. A substrate-binding site is contributed by 106 to 107; it reads IH. Catalysis depends on residues His107 and Asp122. 2 residues coordinate CoA: Tyr208 and Ser214.

The protein belongs to the arylamine N-acetyltransferase family.

It is found in the cytoplasm. The enzyme catalyses an arylamine + acetyl-CoA = an N-acetylarylamine + CoA. Participates in the detoxification of a plethora of hydrazine and arylamine drugs. Catalyzes the N- or O-acetylation of various arylamine and heterocyclic amine substrates and is able to bioactivate several known carcinogens. In Homo sapiens (Human), this protein is Arylamine N-acetyltransferase 1 (NAT1).